A 393-amino-acid chain; its full sequence is S-adenosylmethionine synthase (393 aa).

ATP is bound at residue histidine 17. Residue aspartate 19 participates in Mg(2+) binding. Glutamate 45 lines the K(+) pocket. L-methionine contacts are provided by glutamate 58 and glutamine 106. The interval 106 to 116 is flexible loop; it reads QSAHIAQGVDA. ATP-binding positions include 171–173, 237–238, aspartate 246, 252–253, alanine 269, and lysine 273; these read DAK, KF, and RK. An L-methionine-binding site is contributed by aspartate 246. Residue lysine 277 participates in L-methionine binding.

The protein belongs to the AdoMet synthase family. In terms of assembly, homotetramer; dimer of dimers. The cofactor is Mg(2+). K(+) is required as a cofactor.

It is found in the cytoplasm. It catalyses the reaction L-methionine + ATP + H2O = S-adenosyl-L-methionine + phosphate + diphosphate. It participates in amino-acid biosynthesis; S-adenosyl-L-methionine biosynthesis; S-adenosyl-L-methionine from L-methionine: step 1/1. Functionally, catalyzes the formation of S-adenosylmethionine (AdoMet) from methionine and ATP. The overall synthetic reaction is composed of two sequential steps, AdoMet formation and the subsequent tripolyphosphate hydrolysis which occurs prior to release of AdoMet from the enzyme. This is S-adenosylmethionine synthase from Ruegeria sp. (strain TM1040) (Silicibacter sp.).